The primary structure comprises 296 residues: MSLGAKPFGEKKFIEIKGRRMAYIDEGTGDPILFQHGNPTSSYLWRNIMPHCAGLGRLIACDLIGMGDSDKLDPSGPERYAYAEHRDYLDALWEALDLGDRVVLVVHDWGSALGFDWARRHRERVQGIAYMEAIAMPIEWADFPEQDRDLFQAFRSQAGEELVLQDNVFVEQVLPGLILRPLSEAEMAAYREPFLAAGEARRPTLSWPRQIPIAGTPADVVAIARDYAGWLSESPIPKLFINAEPGALTTGRMRDFCRTWPNQTEITVAGAHFIQEDSPDEIGAAIAAFVRRLRPA.

In terms of domain architecture, AB hydrolase-1 spans 31–155 (PILFQHGNPT…QDRDLFQAFR (125 aa)). Asparagine 38 contacts chloride. Aspartate 108 (nucleophile) is an active-site residue. Tryptophan 109 contacts chloride. The active-site Proton donor is the glutamate 132. The Proton acceptor role is filled by histidine 272.

Belongs to the haloalkane dehalogenase family. Type 2 subfamily. In terms of assembly, monomer.

Its subcellular location is the periplasm. It catalyses the reaction 1-haloalkane + H2O = a halide anion + a primary alcohol + H(+). It carries out the reaction (3R,6R)-1,3,4,6-tetrachlorocyclohexa-1,4-diene + 2 H2O = 2,5-dichlorocyclohexa-2,5-dien-1,4-diol + 2 chloride + 2 H(+). Its pathway is xenobiotic degradation; gamma-hexachlorocyclohexane degradation. With respect to regulation, competitively inhibited by the key pollutants 1,2-dichloroethane (1,2-DCE) and 1,2-dichloropropane (1,2-DCP). Catalyzes hydrolytic cleavage of carbon-halogen bonds in halogenated aliphatic compounds, leading to the formation of the corresponding primary alcohols, halide ions and protons. Has a broad substrate specificity since not only monochloroalkanes (C3 to C10) but also dichloroalkanes (&gt; C3), bromoalkanes, and chlorinated aliphatic alcohols are good substrates. Shows almost no activity with 1,2-dichloroethane, but very high activity with the brominated analog. Is involved in the degradation of the important environmental pollutant gamma-hexachlorocyclohexane (gamma-HCH or lindane) as it also catalyzes conversion of 1,3,4,6-tetrachloro-1,4-cyclohexadiene (1,4-TCDN) to 2,5-dichloro-2,5-cyclohexadiene-1,4-diol (2,5-DDOL) via the intermediate 2,4,5-trichloro-2,5-cyclohexadiene-1-ol (2,4,5-DNOL). This degradation pathway allows S.japonicum UT26 to grow on gamma-HCH as the sole source of carbon and energy. The protein is Haloalkane dehalogenase of Sphingobium indicum (strain DSM 16413 / CCM 7287 / MTCC 6362 / UT26 / NBRC 101211 / UT26S) (Sphingobium japonicum).